A 446-amino-acid chain; its full sequence is MQRFTRPLFGQVLIALALGIALGIWAPDFAQHLKPLGDGFLKLIKMLIAPIVFSVVVVGICGAGELKKVGRVGGKAVIYFEVVTTIALALGIALAYAFGPGHGMNVDPKTLDASAMSSYMATAKQVESSGVAEFLLKLIPDTFVSGFMKGDILQVLLVSILFGCALSLLGERTKPLVGLIDQLSHVLFRMMAVVIRLAPLGVLGAVAFTVGKYGAGSLKQLGFLVLLFYAAVAVFVVVVLGGILRLAGFSIFKLIRFLRAELLVVLGTASSDAVLPSVMNKLEKMGIKRSVVGLVIPTGYSFNLDAFSIYLTLAAVFIAQATNTPLALSDLLLILGVALITSKGAHGIPGSAIVILAATLSVIPAIPAIGLVLVLSVDWFIGIARALGNLLGNCVATVVIAAWEKDIDRARANAVLDGKLDIIEEGEAAARGHGIQVPSASTLPHA.

A run of 10 helical transmembrane segments spans residues 7–26, 46–64, 77–99, 152–171, 192–211, 221–243, 291–313, 318–340, 353–375, and 381–403; these read PLFGQVLIALALGIALGIWA, MLIAPIVFSVVVVGICGAG, VIYFEVVTTIALALGIALAYAFG, ILQVLLVSILFGCALSLLGE, AVVIRLAPLGVLGAVAFTVG, LGFLVLLFYAAVAVFVVVVLGGI, VVGLVIPTGYSFNLDAFSIYLTL, IAQATNTPLALSDLLLILGVALI, IVILAATLSVIPAIPAIGLVLVL, and IGIARALGNLLGNCVATVVIAAW.

It belongs to the dicarboxylate/amino acid:cation symporter (DAACS) (TC 2.A.23) family.

It is found in the cell inner membrane. Its function is as follows. Responsible for the transport of dicarboxylates such as succinate, fumarate, and malate from the periplasm across the membrane. This chain is C4-dicarboxylate transport protein 2 (dctA2), found in Ralstonia nicotianae (strain ATCC BAA-1114 / GMI1000) (Ralstonia solanacearum).